The sequence spans 363 residues: 3-dehydroquinate synthase (363 aa).

Residues 72–77 (SGEKEK), 130–131 (TT), Lys-142, and Lys-151 contribute to the NAD(+) site. The Zn(2+) site is built by Glu-184, His-247, and His-264.

It belongs to the sugar phosphate cyclases superfamily. Dehydroquinate synthase family. Co(2+) is required as a cofactor. Zn(2+) serves as cofactor. The cofactor is NAD(+).

Its subcellular location is the cytoplasm. It carries out the reaction 7-phospho-2-dehydro-3-deoxy-D-arabino-heptonate = 3-dehydroquinate + phosphate. The protein operates within metabolic intermediate biosynthesis; chorismate biosynthesis; chorismate from D-erythrose 4-phosphate and phosphoenolpyruvate: step 2/7. Its function is as follows. Catalyzes the conversion of 3-deoxy-D-arabino-heptulosonate 7-phosphate (DAHP) to dehydroquinate (DHQ). The polypeptide is 3-dehydroquinate synthase (Bacillus anthracis (strain A0248)).